We begin with the raw amino-acid sequence, 287 residues long: Uroplakin-3a (287 aa).

A signal peptide spans 1 to 18 (MLLLWALLALGCLRCGWT). Topologically, residues 19–207 (VNLQPQLASV…DTWPGRRSGG (189 aa)) are lumenal. N-linked (GlcNAc...) asparagine glycosylation is found at Asn74, Asn139, and Asn170. The helical transmembrane segment at 208–235 (MIVITSILGSLPFFLLVGFAGAIILSFV) threads the bilayer. Residues 236 to 287 (DMGSSDGEMTHDSQITQEAVPKTLGTSEPSYSSVNRGPPLDRAEVFSSKLQD) are Cytoplasmic-facing. The tract at residues 243–287 (EMTHDSQITQEAVPKTLGTSEPSYSSVNRGPPLDRAEVFSSKLQD) is disordered. A compositionally biased stretch (polar residues) spans 259 to 270 (LGTSEPSYSSVN).

The protein belongs to the uroplakin-3 family. In terms of assembly, heterodimer with uroplakin-1B (UPK1B).

The protein localises to the endoplasmic reticulum membrane. Its function is as follows. Component of the asymmetric unit membrane (AUM); a highly specialized biomembrane elaborated by terminally differentiated urothelial cells. May play an important role in AUM-cytoskeleton interaction in terminally differentiated urothelial cells. It also contributes to the formation of urothelial glycocalyx which may play an important role in preventing bacterial adherence. The protein is Uroplakin-3a (Upk3a) of Mus musculus (Mouse).